The sequence spans 205 residues: ESCRT-related protein CHMP1 (205 aa).

Coiled-coil stretches lie at residues 13–51 (DLKF…MDGA) and 109–140 (GNLQ…GAMA).

Belongs to the SNF7 family.

The protein resides in the cytoplasm. The protein localises to the endosome membrane. Its function is as follows. Involved in ESCRT-dependent multivesicular body (MVB) formation and sorting of endosomal cargo proteins into MVBs. The protein is ESCRT-related protein CHMP1 of Oryza sativa subsp. japonica (Rice).